Consider the following 149-residue polypeptide: Large ribosomal subunit protein bL9 (149 aa).

This sequence belongs to the bacterial ribosomal protein bL9 family.

Functionally, binds to the 23S rRNA. In Clostridioides difficile (strain 630) (Peptoclostridium difficile), this protein is Large ribosomal subunit protein bL9.